The sequence spans 442 residues: Elongation factor 1-alpha (442 aa).

The region spanning 6–229 is the tr-type G domain; the sequence is KPHMNLIVIG…ALDNLKPPSV (224 aa). Residues 15–22 form a G1 region; the sequence is GHVDHGKS. 15–22 is a GTP binding site; that stretch reads GHVDHGKS. Serine 22 lines the Mg(2+) pocket. The tract at residues 71–75 is G2; that stretch reads GVTID. The tract at residues 92–95 is G3; it reads DAPG. GTP-binding positions include 92–96 and 154–157; these read DAPGH and NKMD. The G4 stretch occupies residues 154–157; sequence NKMD. Residues 195–197 form a G5 region; it reads SAW.

Belongs to the TRAFAC class translation factor GTPase superfamily. Classic translation factor GTPase family. EF-Tu/EF-1A subfamily.

It localises to the cytoplasm. It carries out the reaction GTP + H2O = GDP + phosphate + H(+). Its function is as follows. GTP hydrolase that promotes the GTP-dependent binding of aminoacyl-tRNA to the A-site of ribosomes during protein biosynthesis. This chain is Elongation factor 1-alpha, found in Ignicoccus hospitalis (strain KIN4/I / DSM 18386 / JCM 14125).